Here is a 147-residue protein sequence, read N- to C-terminus: MPVTVKVRRVGQRGPPLELPRYETDGAAGLDLRADEPVTLAPGERRLVPTGLALEIPPGHEGQVRPRSGLAVRHGVGMVNAPGTIDSDYRGEVGVVLVNHGQEPVTFARGDRIAQLVIGPVVRAELALVEDLASSGRGGGGFGSTGR.

Substrate-binding positions include 67–69, Asn-80, and 84–86; these read RSG and TID.

This sequence belongs to the dUTPase family. The cofactor is Mg(2+).

The enzyme catalyses dUTP + H2O = dUMP + diphosphate + H(+). The protein operates within pyrimidine metabolism; dUMP biosynthesis; dUMP from dCTP (dUTP route): step 2/2. Its function is as follows. This enzyme is involved in nucleotide metabolism: it produces dUMP, the immediate precursor of thymidine nucleotides and it decreases the intracellular concentration of dUTP so that uracil cannot be incorporated into DNA. In Anaeromyxobacter sp. (strain Fw109-5), this protein is Deoxyuridine 5'-triphosphate nucleotidohydrolase.